The sequence spans 225 residues: NAD(P)H-quinone oxidoreductase subunit K, chloroplastic (225 aa).

Positions 43, 44, 108, and 139 each coordinate [4Fe-4S] cluster.

It belongs to the complex I 20 kDa subunit family. In terms of assembly, NDH is composed of at least 16 different subunits, 5 of which are encoded in the nucleus. The cofactor is [4Fe-4S] cluster.

The protein localises to the plastid. The protein resides in the chloroplast thylakoid membrane. The catalysed reaction is a plastoquinone + NADH + (n+1) H(+)(in) = a plastoquinol + NAD(+) + n H(+)(out). It catalyses the reaction a plastoquinone + NADPH + (n+1) H(+)(in) = a plastoquinol + NADP(+) + n H(+)(out). Functionally, NDH shuttles electrons from NAD(P)H:plastoquinone, via FMN and iron-sulfur (Fe-S) centers, to quinones in the photosynthetic chain and possibly in a chloroplast respiratory chain. The immediate electron acceptor for the enzyme in this species is believed to be plastoquinone. Couples the redox reaction to proton translocation, and thus conserves the redox energy in a proton gradient. This is NAD(P)H-quinone oxidoreductase subunit K, chloroplastic from Hordeum vulgare (Barley).